We begin with the raw amino-acid sequence, 843 residues long: MIDREAPAAVLAPTPLLRHAIERACRRIAPVWPLKNFVAVNPFLGFSDRSFHATCAMLHRVARIDTLMPRAFYREAIRNGTIETADLAAALAAAPADWRLPTEAAELLKLADNDRIARKPPAVVATVAEVLNELAAGDRHVARTAFMTDEISRWCAAYFDEGQSVWRMPARGLRPYAAWRAWVRYDRNPEMMGIARFRALVADMPDDYVAAIATVIERLGIPARAVEDYLHQALLEIGGWAAYARYLMWNHELAGDRDDTLEQLLAIRVVWGYTLFAQRTDTAFREAWRRAMEQAALPPLDDQLGGDPDFCINMVLQEAYEIAFRRRLLDRLAGAPAARTAGARPAVQAAFCIDVRSEVYRRAMESVGDGVETVGFAGFFGFPIEFVPIGHVTGRAHCPVLLRPQFTVCEAVGGTSEEEDSEILVMRLLRRRVRKAWKSFKLSAVSSFIYVETAGLLFAGKILSDSLAVTRTVHDPNTDGLDDDLIGRLGPRIEPRPVGGRATGFDPAQRVAMAEAVLRAMSMTGPFARLVMLTGHGSTTVNNPHASGLDCGACGGHTGEANARVAAAILNDPDVRVALRQRGIDIPDDTVFLGCLHDTTTDVIRLFDIEQLPASHADDLRRLRALLAKATSLTRLERAALLGIARGAATEQQVVTRSRDWAQVRPEWGLAGNASFIAAPRARTRGIDLGGRSFLHDYDWQQDKDFGTLQLIMTAPMVVASWINLQYYGSTVNNAAFGAGNKVLHNVVGTLGVLEGNAGDLKVGLPWQSVHDGSRFVHEPLRLTVLIEAPLEAINGVIAKNDIVRELVDHHWLHLYAISPQGRVSHAYRGHLLWQQLEERSES.

Zn(2+) is bound by residues Cys-352, Asp-354, His-536, and Cys-551.

Belongs to the inorganic carbon transporter (TC 9.A.2) DabA family. In terms of assembly, forms a complex with DabB. Zn(2+) serves as cofactor.

The protein localises to the cell inner membrane. Functionally, part of an energy-coupled inorganic carbon pump. This chain is Probable inorganic carbon transporter subunit DabA 2, found in Bradyrhizobium sp. (strain BTAi1 / ATCC BAA-1182).